The chain runs to 394 residues: Na(+)/H(+) antiporter NhaA (394 aa).

Helical transmembrane passes span 11 to 31 (LEAA…IFAN), 59 to 79 (LLMW…GMEV), 95 to 115 (IFPA…YWFI), 125 to 145 (GWAI…ALLS), 155 to 175 (FLLA…ALFF), 177 to 197 (HEMS…LVAM), 203 to 220 (TGLI…ASVL), 254 to 274 (ALAP…NAGV), 296 to 316 (LIIG…LLGI), 328 to 348 (IFAI…IAGL), and 365 to 385 (LGIL…LKIT).

This sequence belongs to the NhaA Na(+)/H(+) (TC 2.A.33) antiporter family.

It localises to the cell inner membrane. The catalysed reaction is Na(+)(in) + 2 H(+)(out) = Na(+)(out) + 2 H(+)(in). In terms of biological role, na(+)/H(+) antiporter that extrudes sodium in exchange for external protons. The sequence is that of Na(+)/H(+) antiporter NhaA from Actinobacillus pleuropneumoniae serotype 3 (strain JL03).